The chain runs to 208 residues: Protein disulfide-isomerase A3 (208 aa).

The Thioredoxin 1 domain occupies 1–44; sequence RLAPEYEAAATRYGVSGYPTLKDGEEAGAYDGPRTADGIVSHLK. The residue at position 44 (Lys44) is an N6-succinyllysine. N6-acetyllysine is present on Lys49. Thr133 carries the phosphothreonine modification. One can recognise a Thioredoxin 2 domain in the interval 151-208; that stretch reads SRFLQDYFDGNLKRYLKSEPIPETNDGPVKMDATANDVPSPYEVKGFPTIYFSPANKK. N6-acetyllysine is present on Lys163.

The protein belongs to the protein disulfide isomerase family. As to quaternary structure, part of the major histocompatibility complex class I (MHC I) peptide loading complex composed of TAP1, TAP2, B2M, MHC heavy chain, TAPBP, PDIA3, and CALR. Interacts with ERP27 and CANX. Interacts with SERPINA2 and SERPINA1. Interacts with ATP2A2. In terms of processing, within the major histocompatibility complex class I (MHC I) peptide loading complex forms reversible disulfide-linked heterodimers with TAPBP as part of its protein folding chaperone activity. This is essential to assist the dynamic assembly of the MHC I complex with high affinity antigens in the endoplasmic reticulum. Phosphorylated. In terms of tissue distribution, in the caput epididymal spermatozoa, detected in the mid-peice and at low levels in the principal piece. In the cauda epididymal spermatozoa, detected at very low levels in the principal piece and not in the mid-piece (at protein level).

The protein resides in the endoplasmic reticulum. The protein localises to the endoplasmic reticulum lumen. Its subcellular location is the melanosome. It catalyses the reaction Catalyzes the rearrangement of -S-S- bonds in proteins.. Functionally, protein disulfide isomerase that catalyzes the formation, isomerization, and reduction or oxidation of disulfide bonds in client proteins and functions as a protein folding chaperone. Core component of the major histocompatibility complex class I (MHC I) peptide loading complex where it functions as an essential folding chaperone for TAPBP. Through TAPBP, assists the dynamic assembly of the MHC I complex with high affinity antigens in the endoplasmic reticulum. Therefore, plays a crucial role in the presentation of antigens to cytotoxic T cells in adaptive immunity. In Mesocricetus auratus (Golden hamster), this protein is Protein disulfide-isomerase A3.